The following is a 1012-amino-acid chain: MTNLQDQTQQIVPFIRSLLMPTTGPASIPDDTLEKHTLRSETSTYNLTVGDTGSGLIVFFPGFPGSIVGAHYTLQSNGNYKFDQMLLTAQNLPASYNYCRLVSRSLTVRSSTLPGGVYALNGTINAVTFQGSLSELTDVSYNGLMSATANINDKIGNVLVGEGVTVLSLPTSYDLGYVRLGDPIPAIGLDPKMVATCDSSDRPRVYTITAADNYQFSSQYQTGGVTITLFSANIDAITSLSVGGELVFKTSVQSLVLGATICLIGFDGTAVITRAVAANNGLTAGIDNLMPFNLVIPTNEITQPITSIKLEIVTSKSDGQAGEQMSWSASGSLAVTIHGGNYPGALRPVTLVAYERVATGSVVTVAGVSNFELIPNPELAKNLVTEYGRFDPGAMNYTKLILSERDRLGIKTVWPTREYTDFREYFMEVADLNSPLKIAGAFGFKDIIRAIRRIAVPVVSTLFPPAAPVAHAIGEGVDYLRGDEAQAASGTARAASGKARAASGRIRQLTLAADKGYEVVANLFQVPQNPVVDGILASPGILRGAHNLDCVLREGATLFPVVITTVEDAMTPKALNNKMFAVIEGVREDLQPPSQRGSFIRTLSGHRVYGYAPDGVLPLETGRDYTVVPIDDVWDDSIMLSKDPIPPIVGNSGNLAIAYMDVFRPKVPIHVAMTGALNACGEIEKISFRSTKLATAHRLGLKLAGPGAFDVNTGPNWATFIKRFPHNPRDWDRLPYLNLPYLPPNAGRQYHLAMAASEFKETPELESAVRAMEAAANVDPLFQSALSVFMWLEENGIVTDMANFALSDPNAHRMRNFLANALQAGSKSQRAKYGTAGYGVEARGPTLEGAQREKDTRISKKMETMGIYFATQEWVAFNRHRRPSPGQLKYWQNTREIPDPNEYYLDYVHAEKSRLASEEQILRAATSIYGAPVQAEPLQAFIDEVAKVYEINHGRGPNQEQMKDLLLTAMEMKHRNPRRAPPKPKPKPNAPTQRPPGRLGRWIRTVSDEDLE.

Asp30 is a binding site for a divalent metal cation. A Peptidase S50 domain is found at 513 to 755 (ADKGYEVVAN…AGRQYHLAMA (243 aa)). The Nucleophile role is filled by Ser652. Lys692 is an active-site residue. The tract at residues 970–1012 (MEMKHRNPRRAPPKPKPKPNAPTQRPPGRLGRWIRTVSDEDLE) is disordered. Residues 975–986 (RNPRRAPPKPKP) are compositionally biased toward basic residues. An interaction with VP1 protein region spans residues 1003-1012 (IRTVSDEDLE).

Homotrimer. A central divalent metal stabilizes the VP2 trimer. Interacts with host ITGA4/ITGB1. In terms of assembly, homodimer. Interacts (via C-terminus) with VP1 in the cytoplasm. Interacts with VP2. In terms of processing, specific enzymatic cleavages yield mature proteins. The capsid assembly seems to be regulated by polyprotein processing. The protease VP4 cleaves itself off the polyprotein, thus releasing pre-VP2 and VP3 within the infected cell. During capsid assembly, the C-terminus of pre-VP2 is further processed by VP4, giving rise to VP2, the external capsid protein and three small peptides that all stay closely associated with the capsid.

The protein localises to the virion. Its subcellular location is the host cytoplasm. Capsid protein VP2 self assembles to form an icosahedral capsid with a T=13 symmetry, about 70 nm in diameter, and consisting of 260 VP2 trimers. The capsid encapsulates the genomic dsRNA. VP2 is also involved in attachment and entry into the host cell by interacting with host ITGA4/ITGB1. Functionally, the precursor of VP2 plays an important role in capsid assembly. First, pre-VP2 and VP2 oligomers assemble to form a procapsid. Then, the pre-VP2 intermediates may be processed into VP2 proteins by proteolytic cleavage mediated by VP4 to obtain the mature virion. The final capsid is composed of pentamers and hexamers but VP2 has a natural tendency to assemble into all-pentameric structures. Therefore pre-VP2 may be required to allow formation of the hexameric structures. In terms of biological role, protease VP4 is a serine protease that cleaves the polyprotein into its final products. Pre-VP2 is first partially cleaved, and may be completely processed by VP4 upon capsid maturation. Its function is as follows. Capsid protein VP3 plays a key role in virion assembly by providing a scaffold for the capsid made of VP2. May self-assemble to form a T=4-like icosahedral inner-capsid composed of at least 180 trimers. Plays a role in genomic RNA packaging by recruiting VP1 into the capsid and interacting with the dsRNA genome segments to form a ribonucleoprotein complex. Additionally, the interaction of the VP3 C-terminal tail with VP1 removes the inherent structural blockade of the polymerase active site. Thus, VP3 can also function as a transcriptional activator. Structural peptide 1 is a small peptide derived from pre-VP2 C-terminus. It destabilizes and perforates cell membranes, suggesting a role during entry. Functionally, structural peptide 2 is a small peptide derived from pVP2 C-terminus. It is not essential for the virus viability, but viral growth is affected when missing. In terms of biological role, structural peptide 3 is a small peptide derived from pVP2 C-terminus. It is not essential for the virus viability, but viral growth is affected when missing. Its function is as follows. Structural peptide 4 is a small peptide derived from pVP2 C-terminus. It is essential for the virus viability. This is Structural polyprotein from Avian infectious bursal disease virus (strain E) (IBDV).